A 347-amino-acid chain; its full sequence is NADH-quinone oxidoreductase subunit H (347 aa).

The next 9 membrane-spanning stretches (helical) occupy residues 13–33, 50–70, 82–102, 115–135, 161–181, 198–218, 263–283, 286–306, and 321–341; these read IIMI…IAYV, PNVV…KFVF, AVFL…WAVV, VGIL…IMGG, IGFV…TDIV, FLDW…ISAL, CALT…IWIL, VPGI…FAMV, and LGWK…AFVL.

Belongs to the complex I subunit 1 family. NDH-1 is composed of 14 different subunits. Subunits NuoA, H, J, K, L, M, N constitute the membrane sector of the complex.

It localises to the cell inner membrane. It carries out the reaction a quinone + NADH + 5 H(+)(in) = a quinol + NAD(+) + 4 H(+)(out). In terms of biological role, NDH-1 shuttles electrons from NADH, via FMN and iron-sulfur (Fe-S) centers, to quinones in the respiratory chain. The immediate electron acceptor for the enzyme in this species is believed to be ubiquinone. Couples the redox reaction to proton translocation (for every two electrons transferred, four hydrogen ions are translocated across the cytoplasmic membrane), and thus conserves the redox energy in a proton gradient. This subunit may bind ubiquinone. This is NADH-quinone oxidoreductase subunit H from Rhizobium johnstonii (strain DSM 114642 / LMG 32736 / 3841) (Rhizobium leguminosarum bv. viciae).